A 368-amino-acid chain; its full sequence is Homoserine O-acetyltransferase (368 aa).

The AB hydrolase-1 domain maps to 43-346; it reads ILLEHALTGT…EYGHDAFLVE (304 aa). Residue serine 145 is the Nucleophile of the active site. Arginine 212 serves as a coordination point for substrate. Catalysis depends on residues aspartate 307 and histidine 340. Aspartate 341 contributes to the substrate binding site.

It belongs to the AB hydrolase superfamily. MetX family. Homodimer.

Its subcellular location is the cytoplasm. It catalyses the reaction L-homoserine + acetyl-CoA = O-acetyl-L-homoserine + CoA. It participates in amino-acid biosynthesis; L-methionine biosynthesis via de novo pathway; O-acetyl-L-homoserine from L-homoserine: step 1/1. In terms of biological role, transfers an acetyl group from acetyl-CoA to L-homoserine, forming acetyl-L-homoserine. The polypeptide is Homoserine O-acetyltransferase (Listeria monocytogenes serovar 1/2a (strain ATCC BAA-679 / EGD-e)).